The sequence spans 351 residues: Protein-glutamate methylesterase/protein-glutamine glutaminase 2 (351 aa).

In terms of domain architecture, Response regulatory spans 5–122 (RVICVDDSAL…RDGLLDYSEL (118 aa)). Asp56 carries the 4-aspartylphosphate modification. Positions 154–341 (LNSSEKLVIL…PLPAMSERIL (188 aa)) constitute a CheB-type methylesterase domain. Active-site residues include Ser166, His192, and Asp289.

It belongs to the CheB family. Phosphorylated by CheA. Phosphorylation of the N-terminal regulatory domain activates the methylesterase activity.

It is found in the cytoplasm. It carries out the reaction [protein]-L-glutamate 5-O-methyl ester + H2O = L-glutamyl-[protein] + methanol + H(+). The catalysed reaction is L-glutaminyl-[protein] + H2O = L-glutamyl-[protein] + NH4(+). Involved in chemotaxis. Part of a chemotaxis signal transduction system that modulates chemotaxis in response to various stimuli. Catalyzes the demethylation of specific methylglutamate residues introduced into the chemoreceptors (methyl-accepting chemotaxis proteins or MCP) by CheR. Also mediates the irreversible deamidation of specific glutamine residues to glutamic acid. This Bordetella avium (strain 197N) protein is Protein-glutamate methylesterase/protein-glutamine glutaminase 2.